Here is a 463-residue protein sequence, read N- to C-terminus: ATP synthase subunit beta (463 aa).

Residue 152-159 coordinates ATP; that stretch reads GGAGVGKT.

It belongs to the ATPase alpha/beta chains family. In terms of assembly, F-type ATPases have 2 components, CF(1) - the catalytic core - and CF(0) - the membrane proton channel. CF(1) has five subunits: alpha(3), beta(3), gamma(1), delta(1), epsilon(1). CF(0) has three main subunits: a(1), b(2) and c(9-12). The alpha and beta chains form an alternating ring which encloses part of the gamma chain. CF(1) is attached to CF(0) by a central stalk formed by the gamma and epsilon chains, while a peripheral stalk is formed by the delta and b chains.

Its subcellular location is the cell inner membrane. The catalysed reaction is ATP + H2O + 4 H(+)(in) = ADP + phosphate + 5 H(+)(out). In terms of biological role, produces ATP from ADP in the presence of a proton gradient across the membrane. The catalytic sites are hosted primarily by the beta subunits. The protein is ATP synthase subunit beta of Shewanella sp. (strain MR-7).